The sequence spans 347 residues: Olfactory receptor 13C3 (347 aa).

Topologically, residues 1–55 (MIVQLICTVCFLAVNTFHVRSSFDFLKADDMGEINQTLVSEFLLLGLSGYPKIEI) are extracellular. Asparagine 35 carries an N-linked (GlcNAc...) asparagine glycan. A helical membrane pass occupies residues 56-76 (VYFALILVMYLVILIGNGVLI). At 77–84 (IASIFDSH) the chain is on the cytoplasmic side. A helical transmembrane segment spans residues 85–105 (FHTPMYFFLGNLSFLDICYTS). Topologically, residues 106–129 (SSVPSTLVSLISKKRNISFSGCAV) are extracellular. An intrachain disulfide couples cysteine 127 to cysteine 219. A helical membrane pass occupies residues 130–150 (QMFFGFAMGSTECLLLGMMAF). Residues 151 to 169 (DRYVAICNPLRYPIILSKV) are Cytoplasmic-facing. Residues 170-190 (AYVLMASVSWLSGGINSAVQT) traverse the membrane as a helical segment. The Extracellular segment spans residues 191 to 227 (LLAMRLPFCGNNIINHFACEILAVLKLACADISLNII). A helical transmembrane segment spans residues 228–247 (TMVISNMAFLVLPLMVIFFS). Residues 248 to 267 (YMFILYTILQMNSATGRRKA) lie on the Cytoplasmic side of the membrane. Residues 268–288 (FSTCSAHLTVVIIFYGTIFFM) traverse the membrane as a helical segment. Residues 289–307 (YAKPKSQDLIGEEKLQALD) lie on the Extracellular side of the membrane. The helical transmembrane segment at 308–328 (KLISLFYGVVTPMLNPILYSL) threads the bilayer. Over 329–347 (RNKDVKAAVKYLLNKKPIH) the chain is Cytoplasmic.

Belongs to the G-protein coupled receptor 1 family.

The protein resides in the cell membrane. Functionally, odorant receptor. This is Olfactory receptor 13C3 (OR13C3) from Homo sapiens (Human).